Consider the following 804-residue polypeptide: uncharacterized protein (804 aa).

10 consecutive transmembrane segments (helical) span residues 15–35 (LLIVWLALSLAVACVLALGNI), 243–263 (FLLLSALLTLLLAVAAVAVAM), 301–321 (LSAVTGGAIGLLFENVLMVLL), 333–353 (SLWPWLWALGTMTVISLLVGL), 381–401 (FYLPIVSVVVVLLLAGLMGGS), 403–423 (LLWAVLAGAVVLALLCGVLGW), 453–473 (TLSQLSAFSLSFMLLALLLVL), 680–700 (ALEVMVVLVTACGMLLLLAQV), 734–754 (MLGFVSGLVAAIGAETALAVL), and 769–789 (LWIVLPCSGALLLSLFGGWLG).

It belongs to the ABC-4 integral membrane protein family.

The protein resides in the cell membrane. This is an uncharacterized protein from Escherichia coli (strain K12).